A 583-amino-acid polypeptide reads, in one-letter code: Ferredoxin--nitrite reductase, chloroplastic (583 aa).

A chloroplast-targeting transit peptide spans 1–22; sequence MSSLSVRFLSPPLFSSTPAWPR. The [4Fe-4S] cluster site is built by C461, C467, C502, and C506. C506 provides a ligand contact to siroheme.

It belongs to the nitrite and sulfite reductase 4Fe-4S domain family. As to quaternary structure, monomer. Siroheme is required as a cofactor. The cofactor is [4Fe-4S] cluster.

The protein resides in the plastid. It localises to the chloroplast. The enzyme catalyses 6 oxidized [2Fe-2S]-[ferredoxin] + NH4(+) + 2 H2O = nitrite + 6 reduced [2Fe-2S]-[ferredoxin] + 8 H(+). The protein operates within nitrogen metabolism; nitrate reduction (assimilation). This is Ferredoxin--nitrite reductase, chloroplastic (NIR1) from Betula pendula (European white birch).